The following is a 138-amino-acid chain: Putative pre-16S rRNA nuclease (138 aa).

Belongs to the YqgF nuclease family.

The protein resides in the cytoplasm. Could be a nuclease involved in processing of the 5'-end of pre-16S rRNA. This Escherichia coli O45:K1 (strain S88 / ExPEC) protein is Putative pre-16S rRNA nuclease.